A 152-amino-acid chain; its full sequence is Sec-independent protein translocase protein TatB (152 aa).

Residues 1–21 (MFGISFSELLLVGLVALLVLG) traverse the membrane as a helical segment. A compositionally biased stretch (low complexity) spans 98–115 (HAPGAATVAEAPPASEVP). Residues 98–152 (HAPGAATVAEAPPASEVPAPLPSTPAPAPTAEPAAPVATPATTAPHDSTLPPRAP) form a disordered region. The span at 116–127 (APLPSTPAPAPT) shows a compositional bias: pro residues. Residues 128–142 (AEPAAPVATPATTAP) are compositionally biased toward low complexity.

It belongs to the TatB family. In terms of assembly, the Tat system comprises two distinct complexes: a TatABC complex, containing multiple copies of TatA, TatB and TatC subunits, and a separate TatA complex, containing only TatA subunits. Substrates initially bind to the TatABC complex, which probably triggers association of the separate TatA complex to form the active translocon.

Its subcellular location is the cell inner membrane. In terms of biological role, part of the twin-arginine translocation (Tat) system that transports large folded proteins containing a characteristic twin-arginine motif in their signal peptide across membranes. Together with TatC, TatB is part of a receptor directly interacting with Tat signal peptides. TatB may form an oligomeric binding site that transiently accommodates folded Tat precursor proteins before their translocation. The chain is Sec-independent protein translocase protein TatB from Pseudomonas fluorescens (strain ATCC BAA-477 / NRRL B-23932 / Pf-5).